The sequence spans 117 residues: Large ribosomal subunit protein bL20 (117 aa).

It belongs to the bacterial ribosomal protein bL20 family.

Its function is as follows. Binds directly to 23S ribosomal RNA and is necessary for the in vitro assembly process of the 50S ribosomal subunit. It is not involved in the protein synthesizing functions of that subunit. This Campylobacter fetus subsp. fetus (strain 82-40) protein is Large ribosomal subunit protein bL20.